A 199-amino-acid polypeptide reads, in one-letter code: Probable thymidylate kinase (199 aa).

13–20 (GIDGAGKT) is a binding site for ATP.

It belongs to the thymidylate kinase family.

It catalyses the reaction dTMP + ATP = dTDP + ADP. This Staphylothermus marinus (strain ATCC 43588 / DSM 3639 / JCM 9404 / F1) protein is Probable thymidylate kinase.